Here is a 377-residue protein sequence, read N- to C-terminus: 8-amino-7-oxononanoate synthase (377 aa).

Substrate is bound at residue Arg-13. Pyridoxal 5'-phosphate is bound at residue 100–101 (GY). Residue His-125 coordinates substrate. Pyridoxal 5'-phosphate is bound by residues Ser-171, His-199, and Thr-228. Lys-231 carries the N6-(pyridoxal phosphate)lysine modification. Thr-345 contacts substrate.

This sequence belongs to the class-II pyridoxal-phosphate-dependent aminotransferase family. BioF subfamily. Homodimer. It depends on pyridoxal 5'-phosphate as a cofactor.

It catalyses the reaction 6-carboxyhexanoyl-[ACP] + L-alanine + H(+) = (8S)-8-amino-7-oxononanoate + holo-[ACP] + CO2. The protein operates within cofactor biosynthesis; biotin biosynthesis. In terms of biological role, catalyzes the decarboxylative condensation of pimeloyl-[acyl-carrier protein] and L-alanine to produce 8-amino-7-oxononanoate (AON), [acyl-carrier protein], and carbon dioxide. This chain is 8-amino-7-oxononanoate synthase, found in Nitrosococcus oceani (strain ATCC 19707 / BCRC 17464 / JCM 30415 / NCIMB 11848 / C-107).